Reading from the N-terminus, the 194-residue chain is GTP cyclohydrolase-2 (194 aa).

47 to 51 (RVHSE) is a GTP binding site. Residues Cys-52, Cys-63, and Cys-65 each contribute to the Zn(2+) site. GTP contacts are provided by residues Gln-68, 90-92 (EGR), and Thr-112. Asp-124 acts as the Proton acceptor in catalysis. Arg-126 functions as the Nucleophile in the catalytic mechanism. The GTP site is built by Thr-147 and Lys-152.

It belongs to the GTP cyclohydrolase II family. In terms of assembly, homodimer. The cofactor is Zn(2+).

The enzyme catalyses GTP + 4 H2O = 2,5-diamino-6-hydroxy-4-(5-phosphoribosylamino)-pyrimidine + formate + 2 phosphate + 3 H(+). It participates in cofactor biosynthesis; riboflavin biosynthesis; 5-amino-6-(D-ribitylamino)uracil from GTP: step 1/4. Its function is as follows. Catalyzes the conversion of GTP to 2,5-diamino-6-ribosylamino-4(3H)-pyrimidinone 5'-phosphate (DARP), formate and pyrophosphate. The chain is GTP cyclohydrolase-2 from Buchnera aphidicola subsp. Acyrthosiphon pisum (strain APS) (Acyrthosiphon pisum symbiotic bacterium).